A 336-amino-acid chain; its full sequence is Ornithine carbamoyltransferase, catabolic (336 aa).

Carbamoyl phosphate-binding positions include 57–60 (STRT), Gln84, Arg108, and 135–138 (HPTQ). L-ornithine-binding positions include Asn168, Asp232, and 236–237 (SM). Carbamoyl phosphate-binding positions include 274 to 275 (CL) and Arg321.

The protein belongs to the aspartate/ornithine carbamoyltransferase superfamily. OTCase family.

The protein localises to the cytoplasm. The catalysed reaction is carbamoyl phosphate + L-ornithine = L-citrulline + phosphate + H(+). It functions in the pathway amino-acid degradation; L-arginine degradation via ADI pathway; carbamoyl phosphate from L-arginine: step 2/2. Functionally, reversibly catalyzes the transfer of the carbamoyl group from carbamoyl phosphate (CP) to the N(epsilon) atom of ornithine (ORN) to produce L-citrulline. This chain is Ornithine carbamoyltransferase, catabolic (arcB), found in Ectopseudomonas mendocina (Pseudomonas mendocina).